A 493-amino-acid chain; its full sequence is Xylulose kinase (493 aa).

84–85 (QH) provides a ligand contact to substrate. Residue Asp247 is the Proton acceptor of the active site.

The protein belongs to the FGGY kinase family.

It carries out the reaction D-xylulose + ATP = D-xylulose 5-phosphate + ADP + H(+). Functionally, catalyzes the phosphorylation of D-xylulose to D-xylulose 5-phosphate. This chain is Xylulose kinase, found in Haemophilus influenzae (strain ATCC 51907 / DSM 11121 / KW20 / Rd).